Reading from the N-terminus, the 799-residue chain is Protein translocase subunit SecA 1 (799 aa).

ATP contacts are provided by residues Gln85, 103–107 (GEGKT), and Asp504.

This sequence belongs to the SecA family. In terms of assembly, monomer and homodimer. Part of the essential Sec protein translocation apparatus which comprises SecA, SecYEG and auxiliary proteins SecDF. Other proteins may also be involved.

It is found in the cell membrane. The protein localises to the cytoplasm. The catalysed reaction is ATP + H2O + cellular proteinSide 1 = ADP + phosphate + cellular proteinSide 2.. In terms of biological role, part of the Sec protein translocase complex. Interacts with the SecYEG preprotein conducting channel. Has a central role in coupling the hydrolysis of ATP to the transfer of proteins into and across the cell membrane, serving as an ATP-driven molecular motor driving the stepwise translocation of polypeptide chains across the membrane. In Lactobacillus johnsonii (strain CNCM I-12250 / La1 / NCC 533), this protein is Protein translocase subunit SecA 1.